The following is a 105-amino-acid chain: T cell receptor alpha variable 40 (105 aa).

A signal peptide spans 1 to 19 (MNSSLDFLILILMFGGTSS). The 86-residue stretch at 20 to 105 (NSVKQTGQIT…DSAVYYCLLG (86 aa)) folds into the Ig-like domain. Residue asparagine 39 is glycosylated (N-linked (GlcNAc...) asparagine). A disulfide bridge links cysteine 40 with cysteine 102.

In terms of assembly, alpha-beta TR is a heterodimer composed of an alpha and beta chain; disulfide-linked. The alpha-beta TR is associated with the transmembrane signaling CD3 coreceptor proteins to form the TR-CD3 (TcR or TCR). The assembly of alpha-beta TR heterodimers with CD3 occurs in the endoplasmic reticulum where a single alpha-beta TR heterodimer associates with one CD3D-CD3E heterodimer, one CD3G-CD3E heterodimer and one CD247 homodimer forming a stable octameric structure. CD3D-CD3E and CD3G-CD3E heterodimers preferentially associate with TR alpha and TR beta chains, respectively. The association of the CD247 homodimer is the last step of TcR assembly in the endoplasmic reticulum and is required for transport to the cell surface.

Its subcellular location is the cell membrane. In terms of biological role, v region of the variable domain of T cell receptor (TR) alpha chain that participates in the antigen recognition. Alpha-beta T cell receptors are antigen specific receptors which are essential to the immune response and are present on the cell surface of T lymphocytes. Recognize peptide-major histocompatibility (MH) (pMH) complexes that are displayed by antigen presenting cells (APC), a prerequisite for efficient T cell adaptive immunity against pathogens. Binding of alpha-beta TR to pMH complex initiates TR-CD3 clustering on the cell surface and intracellular activation of LCK that phosphorylates the ITAM motifs of CD3G, CD3D, CD3E and CD247 enabling the recruitment of ZAP70. In turn ZAP70 phosphorylates LAT, which recruits numerous signaling molecules to form the LAT signalosome. The LAT signalosome propagates signal branching to three major signaling pathways, the calcium, the mitogen-activated protein kinase (MAPK) kinase and the nuclear factor NF-kappa-B (NF-kB) pathways, leading to the mobilization of transcription factors that are critical for gene expression and essential for T cell growth and differentiation. The T cell repertoire is generated in the thymus, by V-(D)-J rearrangement. This repertoire is then shaped by intrathymic selection events to generate a peripheral T cell pool of self-MH restricted, non-autoaggressive T cells. Post-thymic interaction of alpha-beta TR with the pMH complexes shapes TR structural and functional avidity. The chain is T cell receptor alpha variable 40 from Homo sapiens (Human).